A 219-amino-acid chain; its full sequence is MNSALNPVAASTAATALTPTSRPLVLGSTSPYRRELLQRLHLPFEVATPDVDETPLPGETPRLLAERLALAKARAVARNFPHAVVIGSDQVADLNGLPLGKPGTHERAVAQLRQMRGQTVVFQTAVAVVCLDSGFEQSSLAAVRVTFRNLTDGEIENYLRAEQPYDCAGSAKSEGLGIALLESIDNDDPTALVGLPLIRTCKMIQAAGVALFADRGEHP.

Aspartate 89 functions as the Proton acceptor in the catalytic mechanism.

Belongs to the Maf family. YceF subfamily. A divalent metal cation serves as cofactor.

Its subcellular location is the cytoplasm. It catalyses the reaction N(7)-methyl-GTP + H2O = N(7)-methyl-GMP + diphosphate + H(+). Its function is as follows. Nucleoside triphosphate pyrophosphatase that hydrolyzes 7-methyl-GTP (m(7)GTP). May have a dual role in cell division arrest and in preventing the incorporation of modified nucleotides into cellular nucleic acids. This chain is 7-methyl-GTP pyrophosphatase, found in Polaromonas sp. (strain JS666 / ATCC BAA-500).